The chain runs to 704 residues: DNA ligase (704 aa).

NAD(+)-binding positions include 43–47 (DADYD), 92–93 (SL), and Glu-124. The N6-AMP-lysine intermediate role is filled by Lys-126. Arg-147, Glu-182, Lys-298, and Lys-322 together coordinate NAD(+). Residues Cys-427, Cys-430, Cys-445, and Cys-451 each coordinate Zn(2+). One can recognise a BRCT domain in the interval 625–704 (PVASPVAGRI…DGWLRLIGDA (80 aa)).

This sequence belongs to the NAD-dependent DNA ligase family. LigA subfamily. It depends on Mg(2+) as a cofactor. Mn(2+) serves as cofactor.

The catalysed reaction is NAD(+) + (deoxyribonucleotide)n-3'-hydroxyl + 5'-phospho-(deoxyribonucleotide)m = (deoxyribonucleotide)n+m + AMP + beta-nicotinamide D-nucleotide.. In terms of biological role, DNA ligase that catalyzes the formation of phosphodiester linkages between 5'-phosphoryl and 3'-hydroxyl groups in double-stranded DNA using NAD as a coenzyme and as the energy source for the reaction. It is essential for DNA replication and repair of damaged DNA. In Cereibacter sphaeroides (strain KD131 / KCTC 12085) (Rhodobacter sphaeroides), this protein is DNA ligase.